Consider the following 92-residue polypeptide: PqqA binding protein (92 aa).

This sequence belongs to the PqqD family. As to quaternary structure, monomer. Interacts with PqqE.

The protein operates within cofactor biosynthesis; pyrroloquinoline quinone biosynthesis. Functionally, functions as a PqqA binding protein and presents PqqA to PqqE, in the pyrroloquinoline quinone (PQQ) biosynthetic pathway. This Klebsiella pneumoniae (strain 342) protein is PqqA binding protein.